We begin with the raw amino-acid sequence, 137 residues long: Ribonuclease kappa (137 aa).

2 helical membrane-spanning segments follow: residues 52 to 72 (ACGI…GIFF) and 104 to 124 (VSYN…FSFC).

This sequence belongs to the RNase K family. Interacts with the proton translocation complex V0 of the V-ATPase. Interacts with ATP6AP1. In terms of tissue distribution, widely expressed.

The protein localises to the endomembrane system. Its subcellular location is the cytoplasmic vesicle. The protein resides in the clathrin-coated vesicle membrane. Functionally, endoribonuclease which preferentially cleaves ApU and ApG phosphodiester bonds. Hydrolyzes UpU bonds at a lower rate. Regulates the activity of vacuolar (H+)-ATPase (V-ATPase) which is responsible for acidifying and maintaining the pH of intracellular compartments. Required at an early stage of receptor-mediated endocytosis. (Microbial infection) Required at an early stage of both clathrin-mediated and clathrin-independent endocytic uptake of a diverse set of viruses, including dengue, West Nile, Sindbis, Rift Valley Fever, influenza, and human rhinoviruses. This is Ribonuclease kappa (RNASEK) from Homo sapiens (Human).